Consider the following 461-residue polypeptide: DNA polymerase delta subunit 3 (461 aa).

Disordered stretches follow at residues 148–229 (VAQA…SAKG), 249–380 (VPGQ…KRVL), and 399–461 (YESE…CQKK). Residues 155 to 172 (ARSSSQTPSDTSAVSTPP) are compositionally biased toward polar residues. The segment covering 205–214 (DANKEPKAKE) has biased composition (basic and acidic residues). A compositionally biased stretch (low complexity) spans 215–228 (APSVSAASSKPSAK). A compositionally biased stretch (basic and acidic residues) spans 279-304 (KPGRKTEPAKIQQKDKKSKMKRMDKS). A compositionally biased stretch (basic residues) spans 371-380 (GKKRKRKRVL). Residues 427 to 436 (VKKEPKEERK) are compositionally biased toward basic and acidic residues. Residues 451–458 (QISIMGFC) carry the PIP-box motif.

In terms of assembly, component of both the DNA polymerase delta and DNA polymerase zeta complexes. The tetrameric DNA polymerase delta complex (Pol-delta4), which consists of POLD1/p125, POLD2/p50, POLD3/p66/p68 and POLD4/p12, with POLD1 bearing DNA polymerase and 3' to 5' proofreading exonuclease activities.

It is found in the cytoplasm. It localises to the nucleus. Its function is as follows. Accessory component of both the DNA polymerase delta complex and the DNA polymerase zeta complex. As a component of the trimeric and tetrameric DNA polymerase delta complexes (Pol-delta3 and Pol-delta4, respectively), plays a role in high fidelity genome replication, including in lagging strand synthesis, and repair. Required for optimal Pol-delta activity. Stabilizes the Pol-delta complex and plays a major role in Pol-delta stimulation by PCNA. Pol-delta3 and Pol-delta4 are characterized by the absence or the presence of POLD4. They exhibit differences in catalytic activity. Most notably, Pol-delta3 shows higher proofreading activity than Pol-delta4. Although both Pol-delta3 and Pol-delta4 process Okazaki fragments in vitro, Pol-delta3 may also be better suited to fulfill this task, exhibiting near-absence of strand displacement activity compared to Pol-delta4 and stalling on encounter with the 5'-blocking oligonucleotides. Pol-delta3 idling process may avoid the formation of a gap, while maintaining a nick that can be readily ligated. Along with DNA polymerase kappa, DNA polymerase delta carries out approximately half of nucleotide excision repair (NER) synthesis following UV irradiation. In this context, POLD3, along with PCNA and RFC1-replication factor C complex, is required to recruit POLD1, the catalytic subunit of the polymerase delta complex, to DNA damage sites. Under conditions of DNA replication stress, required for the repair of broken replication forks through break-induced replication (BIR). Involved in the translesion synthesis (TLS) of templates carrying O6-methylguanine or abasic sites performed by Pol-delta4, independently of DNA polymerase zeta (REV3L) or eta (POLH). Facilitates abasic site bypass by DNA polymerase delta by promoting extension from the nucleotide inserted opposite the lesion. Also involved in TLS, as a component of the tetrameric DNA polymerase zeta complex. Along with POLD2, dramatically increases the efficiency and processivity of DNA synthesis of the DNA polymerase zeta complex compared to the minimal zeta complex, consisting of only REV3L and REV7. In Gallus gallus (Chicken), this protein is DNA polymerase delta subunit 3 (POLD3).